The following is a 197-amino-acid chain: Xanthine phosphoribosyltransferase (197 aa).

Xanthine-binding residues include Leu-20 and Asn-27. 128–132 (ANGQA) contacts 5-phospho-alpha-D-ribose 1-diphosphate. Lys-156 contacts xanthine.

The protein belongs to the purine/pyrimidine phosphoribosyltransferase family. Xpt subfamily. Homodimer.

Its subcellular location is the cytoplasm. The enzyme catalyses XMP + diphosphate = xanthine + 5-phospho-alpha-D-ribose 1-diphosphate. The protein operates within purine metabolism; XMP biosynthesis via salvage pathway; XMP from xanthine: step 1/1. In terms of biological role, converts the preformed base xanthine, a product of nucleic acid breakdown, to xanthosine 5'-monophosphate (XMP), so it can be reused for RNA or DNA synthesis. This Bacillus cereus (strain G9842) protein is Xanthine phosphoribosyltransferase.